The sequence spans 307 residues: Ribosomal RNA small subunit methyltransferase H (307 aa).

S-adenosyl-L-methionine-binding positions include 32–34 (GGH), D52, F78, D99, and Q106.

It belongs to the methyltransferase superfamily. RsmH family.

The protein localises to the cytoplasm. It catalyses the reaction cytidine(1402) in 16S rRNA + S-adenosyl-L-methionine = N(4)-methylcytidine(1402) in 16S rRNA + S-adenosyl-L-homocysteine + H(+). Its function is as follows. Specifically methylates the N4 position of cytidine in position 1402 (C1402) of 16S rRNA. In Acinetobacter baumannii (strain SDF), this protein is Ribosomal RNA small subunit methyltransferase H.